Consider the following 229-residue polypeptide: MNKLNEALKKAEHIVFLTGAGVSVPSGIPDYRSKNGLYAGMSSPEYMLSHTCLVREPEKFYQFVTENMYYPDAEPNAIHTKMAEIEAEKDVTIITQNIDGLHEKAGSKKVVNFHGSLYHCYCQKCGMSVTAEEYLKSDIHSGCGGVIRPDVVLYEEAIPESAIDQSLAAIRQADLIVIVGTSFRVSPFCNLTDYRNKKARIFAVNKEQISLPYPFEMMESDAVKVFAEI.

The 229-residue stretch at 1-229 (MNKLNEALKK…SDAVKVFAEI (229 aa)) folds into the Deacetylase sirtuin-type domain. Residues Ala20, Arg32, Gln96, Ile98, Asp99, His114, Thr181, Ser182, Asn205, and Val223 each contribute to the NAD(+) site. 2 residues coordinate nicotinamide: Ile98 and Asp99. Catalysis depends on His114, which acts as the Proton acceptor.

It belongs to the sirtuin family. Class U subfamily.

It localises to the cytoplasm. It catalyses the reaction N(6)-acetyl-L-lysyl-[protein] + NAD(+) + H2O = 2''-O-acetyl-ADP-D-ribose + nicotinamide + L-lysyl-[protein]. In terms of biological role, NAD-dependent protein deacetylase which modulates the activities of several enzymes which are inactive in their acetylated form. The sequence is that of NAD-dependent protein deacetylase from Listeria monocytogenes serotype 4b (strain F2365).